Reading from the N-terminus, the 1009-residue chain is MYRRENINFSHPPQLKSPPPMSSPLDSNRSYRWTSLTAANNSKFADTPVKETPQKPDMSWWSPSRGDTWRLNAPRGRTLDLVAAFDQCSRQDQLDSPRYANLGRYRRNSEPMQDNEKEVVTTNFIDDSMIEDHEEYEEHDIELGTDFYDPHMIRHHRSSERFEQSLGTGQQIETIHISTRLVPQLKRVPNSDYANDGRGDMKEYGSISKKNETPILDGTPKRPSPLTTRNIHKVDINRMDHLMKTENTVAGFITLTPQVSKVTHKSDFSKHFGQEESVRASPMSRRNRRGTQTIVLPSFDSPASVRKSIPSPGLPTKTDIRSPSSLVKSIANDFEKADFGFHRKIDAAEEIAQLRKRADNSTFDENQNMVSDSAEDNVSNDFVPRISHLEMHPSVHMGISGYAKKNHVPYGESNEEVLYSLPIKKQSRNVDREGMDQTDEILLTPRAITMRQSLPFSDIPEERTCDKIDEMFDFVEVPTGDYDDKTTLERTVDGYAEVKSQKSPNKMIRNRLDLSTNTYQEIEFEKDTTPYMQEFEEDGTGYSASSSGPQFTRSPTLVTPHAGQSVAEYRVSDKEGCAKTEKVVVQKMSQPSALATSTPKGTFAWRNKNQSNAADDSFVSSISNFSAADKINDSKRQISKLIETIEKTRKHIQLAEISLIDAKRAQMVVQELASQRVLLICRERLKLQLDEVRRLQALSVVRHPPPPINRHFKSAMVISNIAIHLNKNFNCRGSFAFIVALKCRTEIEATGVVTLLAHYQTRMHVIHFGEHMHFSNLPVDFVIAMEVYMMRVPEYKAPEKTCAAVLAAKFRNLLVPNSAHRRARNNSVLSNRTVLSMPGYQAPDCDFRFCGKLTLDRDSAGDRQFYLDDVTYPLEGTVKLQSHCSSLPEAIDVEYRGFLYLFDERSPNGEAAWDRYWAMLHRGIIFFWKNPIDEKNQKVPLSQIDLTKCTNQSVEETRNGRDHEFHIELLIDQTPSLLEKRRVVLAAESSDHLASWLNAINDTLFVLRS.

3 disordered regions span residues 1 to 29 (MYRR…DSNR), 272 to 295 (FGQE…QTIV), and 539 to 558 (GTGY…PTLV). Residues 542–557 (YSASSSGPQFTRSPTL) are compositionally biased toward polar residues. Residues 626–657 (SAADKINDSKRQISKLIETIEKTRKHIQLAEI) adopt a coiled-coil conformation. One can recognise a PH domain in the interval 892 to 1005 (DVEYRGFLYL…WLNAINDTLF (114 aa)).

As to expression, localizes to the surface of the rachis.

In terms of biological role, required to maintain the structure of the rachis, the central cytoplasmic core of the syncytial adult gonad. Failure to maintain the rachis leads to premature dissociation of oocytes and thereby impedes oogenesis. The chain is Anillin-like protein 2 (ani-2) from Caenorhabditis elegans.